Reading from the N-terminus, the 400-residue chain is 3-phenylpropionate/cinnamic acid dioxygenase ferredoxin--NAD(+) reductase component (400 aa).

5–36 (TIIIVGGGQAAAMAAASLRQQGFTGELHLFSD) contributes to the FAD binding site. Residue 146–174 (SVVIVGAGTIGLELAASATQRRCKVTVIE) coordinates NAD(+).

The protein belongs to the bacterial ring-hydroxylating dioxygenase ferredoxin reductase family. As to quaternary structure, this dioxygenase system consists of four proteins: the two subunits of the hydroxylase component (HcaE and HcaF), a ferredoxin (HcaC) and a ferredoxin reductase (HcaD). FAD serves as cofactor.

The enzyme catalyses 2 reduced [2Fe-2S]-[ferredoxin] + NAD(+) + H(+) = 2 oxidized [2Fe-2S]-[ferredoxin] + NADH. It participates in aromatic compound metabolism; 3-phenylpropanoate degradation. Part of the multicomponent 3-phenylpropionate dioxygenase, that converts 3-phenylpropionic acid (PP) and cinnamic acid (CI) into 3-phenylpropionate-dihydrodiol (PP-dihydrodiol) and cinnamic acid-dihydrodiol (CI-dihydrodiol), respectively. The chain is 3-phenylpropionate/cinnamic acid dioxygenase ferredoxin--NAD(+) reductase component from Escherichia coli O157:H7.